A 190-amino-acid chain; its full sequence is uncharacterized protein (190 aa).

In terms of domain architecture, HTH tetR-type spans 1-58 (MDKRILAETFRLIKQKGFSFTMNDLAAALGTSKRTLYAYYSSKDQLVEAVVEQFIAEM). Residues 21 to 40 (TMNDLAAALGTSKRTLYAYY) constitute a DNA-binding region (H-T-H motif).

This is an uncharacterized protein from Bacillus subtilis (strain 168).